We begin with the raw amino-acid sequence, 103 residues long: Small ribosomal subunit protein uS10 (103 aa).

This sequence belongs to the universal ribosomal protein uS10 family. In terms of assembly, part of the 30S ribosomal subunit.

Functionally, involved in the binding of tRNA to the ribosomes. The chain is Small ribosomal subunit protein uS10 from Colwellia psychrerythraea (strain 34H / ATCC BAA-681) (Vibrio psychroerythus).